The chain runs to 145 residues: D-aminoacyl-tRNA deacylase (145 aa).

Positions 137 to 138 (GP) match the Gly-cisPro motif, important for rejection of L-amino acids motif.

The protein belongs to the DTD family. In terms of assembly, homodimer.

The protein localises to the cytoplasm. The enzyme catalyses glycyl-tRNA(Ala) + H2O = tRNA(Ala) + glycine + H(+). It catalyses the reaction a D-aminoacyl-tRNA + H2O = a tRNA + a D-alpha-amino acid + H(+). An aminoacyl-tRNA editing enzyme that deacylates mischarged D-aminoacyl-tRNAs. Also deacylates mischarged glycyl-tRNA(Ala), protecting cells against glycine mischarging by AlaRS. Acts via tRNA-based rather than protein-based catalysis; rejects L-amino acids rather than detecting D-amino acids in the active site. By recycling D-aminoacyl-tRNA to D-amino acids and free tRNA molecules, this enzyme counteracts the toxicity associated with the formation of D-aminoacyl-tRNA entities in vivo and helps enforce protein L-homochirality. The chain is D-aminoacyl-tRNA deacylase from Pseudomonas fluorescens (strain Pf0-1).